We begin with the raw amino-acid sequence, 363 residues long: Fructose-bisphosphate aldolase, muscle type (363 aa).

Substrate contacts are provided by Arg56 and Lys147. Catalysis depends on Lys230, which acts as the Schiff-base intermediate with dihydroxyacetone-P.

This sequence belongs to the class I fructose-bisphosphate aldolase family. Homotetramer. As to expression, expressed mainly in the skeletal muscle, heart muscle, brain, and some other tissues, but probably not in liver.

The catalysed reaction is beta-D-fructose 1,6-bisphosphate = D-glyceraldehyde 3-phosphate + dihydroxyacetone phosphate. It functions in the pathway carbohydrate degradation; glycolysis; D-glyceraldehyde 3-phosphate and glycerone phosphate from D-glucose: step 4/4. This is Fructose-bisphosphate aldolase, muscle type from Lethenteron camtschaticum (Japanese lamprey).